The following is a 253-amino-acid chain: Phosphate import ATP-binding protein PstB (253 aa).

One can recognise an ABC transporter domain in the interval 5–248; sequence IETVNLNVYY…PEHELTEKYV (244 aa). Position 37–44 (37–44) interacts with ATP; the sequence is GPSGCGKS.

This sequence belongs to the ABC transporter superfamily. Phosphate importer (TC 3.A.1.7) family. In terms of assembly, the complex is composed of two ATP-binding proteins (PstB), two transmembrane proteins (PstC and PstA) and a solute-binding protein (PstS).

It localises to the cell membrane. The enzyme catalyses phosphate(out) + ATP + H2O = ADP + 2 phosphate(in) + H(+). Functionally, part of the ABC transporter complex PstSACB involved in phosphate import. Responsible for energy coupling to the transport system. This is Phosphate import ATP-binding protein PstB from Thermococcus kodakarensis (strain ATCC BAA-918 / JCM 12380 / KOD1) (Pyrococcus kodakaraensis (strain KOD1)).